A 259-amino-acid chain; its full sequence is Imidazole glycerol phosphate synthase subunit HisF (259 aa).

Catalysis depends on residues aspartate 11 and aspartate 130.

The protein belongs to the HisA/HisF family. As to quaternary structure, heterodimer of HisH and HisF.

The protein localises to the cytoplasm. It carries out the reaction 5-[(5-phospho-1-deoxy-D-ribulos-1-ylimino)methylamino]-1-(5-phospho-beta-D-ribosyl)imidazole-4-carboxamide + L-glutamine = D-erythro-1-(imidazol-4-yl)glycerol 3-phosphate + 5-amino-1-(5-phospho-beta-D-ribosyl)imidazole-4-carboxamide + L-glutamate + H(+). It participates in amino-acid biosynthesis; L-histidine biosynthesis; L-histidine from 5-phospho-alpha-D-ribose 1-diphosphate: step 5/9. IGPS catalyzes the conversion of PRFAR and glutamine to IGP, AICAR and glutamate. The HisF subunit catalyzes the cyclization activity that produces IGP and AICAR from PRFAR using the ammonia provided by the HisH subunit. This chain is Imidazole glycerol phosphate synthase subunit HisF, found in Polaromonas sp. (strain JS666 / ATCC BAA-500).